The following is a 65-amino-acid chain: Small ribosomal subunit protein eS31 (65 aa).

Residues Cys36, Cys39, Cys55, and Cys58 each contribute to the Zn(2+) site. A C4-type zinc finger spans residues 36–58 (CPKCGSVMAFHREPVPRWHCGKC).

It belongs to the eukaryotic ribosomal protein eS31 family. In terms of assembly, part of the 30S ribosomal subunit. Zn(2+) serves as cofactor.

In Pyrobaculum calidifontis (strain DSM 21063 / JCM 11548 / VA1), this protein is Small ribosomal subunit protein eS31.